Here is a 149-residue protein sequence, read N- to C-terminus: Urease accessory protein UreE (149 aa).

This sequence belongs to the UreE family.

The protein localises to the cytoplasm. Functionally, involved in urease metallocenter assembly. Binds nickel. Probably functions as a nickel donor during metallocenter assembly. This is Urease accessory protein UreE from Prochlorococcus marinus (strain MIT 9312).